A 131-amino-acid chain; its full sequence is MAKPSGKSTTKKKVKKTVVDGIAHIHASFNNTIVTITDRQGNTLSWATAGGSGFRGSRKSTPFAAQVAAERAGQAAQDYGLKNLDVEVKGPGPGRESAVRALNNIGYKVNNITDVTPIPHNGCRPPKKRRV.

This sequence belongs to the universal ribosomal protein uS11 family. As to quaternary structure, part of the 30S ribosomal subunit. Interacts with proteins S7 and S18. Binds to IF-3.

Its function is as follows. Located on the platform of the 30S subunit, it bridges several disparate RNA helices of the 16S rRNA. Forms part of the Shine-Dalgarno cleft in the 70S ribosome. The chain is Small ribosomal subunit protein uS11 from Saccharophagus degradans (strain 2-40 / ATCC 43961 / DSM 17024).